A 122-amino-acid polypeptide reads, in one-letter code: Structural protein p14.5 (122 aa).

Disordered regions lie at residues 1-27 (MADF…LEYD) and 73-122 (EDNN…HKSK). At alanine 2 the chain carries N-acetylalanine; by host. The segment covering 105–122 (KPKKKKHLFPKLSSHKSK) has biased composition (basic residues).

It belongs to the asfivirus structural protein p14.5 family. In terms of assembly, interacts with the major capsid protein. Interacts with host IRF3; this interaction interferes with the recruitment of IRF3 to TBK1. In terms of processing, acetylated.

The protein localises to the virion. In terms of biological role, structural protein required for transport of intracellular particles from the assembly sites to the plasma membrane. Binds to both ssDNA and dsDNA. Suppressed the activation of the cGAS/STING pathway by interfering with the recruitment of IRF3 to TBK1, which in turn suppresses IRF3 phosphorylation, decreasing interferon production. The protein is Structural protein p14.5 of African swine fever virus (isolate Warthog/Namibia/Wart80/1980) (ASFV).